The chain runs to 35 residues: MTLAQFAMIFWHDLAAPILAGIITAAIVSWWRNRK.

Residues 8–28 (MIFWHDLAAPILAGIITAAIV) traverse the membrane as a helical segment.

It belongs to the Ldr toxic peptide family.

It is found in the cell inner membrane. Functionally, toxic component of a type I toxin-antitoxin (TA) system. Inhibits ATP synthesis possibly due to its insertion in the cell inner membrane, ATP levels drop over 50% 2 minutes after induction. Overexpression is toxic leading to cell death, it inhibits cell growth within 30 minutes; C-terminally tagged versions of the protein are toxic while N-terminally tagged versions are not. The protein is Small toxic polypeptide LdrA (ldrA) of Escherichia coli (strain K12).